We begin with the raw amino-acid sequence, 262 residues long: Phosphonates import ATP-binding protein PhnC (262 aa).

In terms of domain architecture, ABC transporter spans 5–253 (IRVEKLAKTF…RFDHLYRSIN (249 aa)). Residue 37–44 (GPSGSGKS) coordinates ATP.

It belongs to the ABC transporter superfamily. Phosphonates importer (TC 3.A.1.9.1) family. The complex is composed of two ATP-binding proteins (PhnC), two transmembrane proteins (PhnE) and a solute-binding protein (PhnD).

The protein localises to the cell inner membrane. It carries out the reaction phosphonate(out) + ATP + H2O = phosphonate(in) + ADP + phosphate + H(+). Its function is as follows. Part of the ABC transporter complex PhnCDE involved in phosphonates import. Responsible for energy coupling to the transport system. This chain is Phosphonates import ATP-binding protein PhnC, found in Shigella flexneri serotype 5b (strain 8401).